The primary structure comprises 387 residues: Palmitoyltransferase ZDHHC16A (387 aa).

2 helical membrane-spanning segments follow: residues 73 to 93 and 106 to 126; these read WFGMVFVFLVVALTSSVVFIA and SPGWMIWHICYGHWNLVMIVF. The region spanning 150 to 200 is the DHHC domain; it reads SVCKKCIIPKPARSHHCGICKTCILKMDHHCPWLNNCVGHFNHRYFFSFCL. Catalysis depends on cysteine 180, which acts as the S-palmitoyl cysteine intermediate. 3 helical membrane-spanning segments follow: residues 198 to 218, 236 to 256, and 281 to 301; these read FCLFLTLGCMYCSVSGRHLFI, GVPVTGIGLLIGIVPSAGVAG, and VIYMWVLTSTVSVALGALTLW.

It belongs to the DHHC palmitoyltransferase family. In terms of tissue distribution, expressed in the central nervous system (CNS). Expressed in the developing forebrain, and especially in the telencephalon.

The protein resides in the endoplasmic reticulum membrane. It carries out the reaction L-cysteinyl-[protein] + hexadecanoyl-CoA = S-hexadecanoyl-L-cysteinyl-[protein] + CoA. Functionally, palmitoyl acyltransferase that mediates palmitoylation of proteins and is required during embryonic heart development. Involved in the proliferation of neural stem cells by regulating the FGF/ERK pathway. Involved in the proliferation of neural stem cells by regulating the FGF/ERK pathway. This is Palmitoyltransferase ZDHHC16A from Danio rerio (Zebrafish).